The sequence spans 173 residues: RNA silencing suppressor p19 (173 aa).

The segment covering 1–21 (MERAIQRSDAREQANSERWDG) has biased composition (basic and acidic residues). Residues 1 to 34 (MERAIQRSDAREQANSERWDGRCGGTITPFKLPD) are disordered.

It belongs to the tombusvirus protein p19 family. As to quaternary structure, homodimer.

Viral suppressor of RNA silencing which binds specifically to silencing RNAs (siRNAs). Acts as a molecular caliper to specifically select siRNAs based on the length of the duplex region of the RNA. The chain is RNA silencing suppressor p19 from Cucumis sativus (Cucumber).